We begin with the raw amino-acid sequence, 155 residues long: Putative pre-16S rRNA nuclease (155 aa).

Belongs to the YqgF nuclease family.

Its subcellular location is the cytoplasm. Its function is as follows. Could be a nuclease involved in processing of the 5'-end of pre-16S rRNA. This is Putative pre-16S rRNA nuclease from Wolbachia pipientis wMel.